Here is a 196-residue protein sequence, read N- to C-terminus: Small ribosomal subunit protein uS4c (196 aa).

Residues 17 to 36 form a disordered region; sequence ALPGLTRKTPKSGSNLKKKF. In terms of domain architecture, S4 RNA-binding spans 89–150; that stretch reads MRLDNILFRL…NQRSKRLIQN (62 aa).

Belongs to the universal ribosomal protein uS4 family. As to quaternary structure, part of the 30S ribosomal subunit. Contacts protein S5. The interaction surface between S4 and S5 is involved in control of translational fidelity.

It localises to the plastid. It is found in the chloroplast. In terms of biological role, one of the primary rRNA binding proteins, it binds directly to 16S rRNA where it nucleates assembly of the body of the 30S subunit. With S5 and S12 plays an important role in translational accuracy. In Phyllostachys flexuosa (Drooping timber bamboo), this protein is Small ribosomal subunit protein uS4c (rps4).